We begin with the raw amino-acid sequence, 298 residues long: N-acetylmuramic acid 6-phosphate etherase (298 aa).

The 164-residue stretch at 55-218 folds into the SIS domain; the sequence is IHAQVSGGGR…STGLMIKSGK (164 aa). Catalysis depends on Glu83, which acts as the Proton donor. The active site involves Glu114.

Belongs to the GCKR-like family. MurNAc-6-P etherase subfamily. Homodimer.

It carries out the reaction N-acetyl-D-muramate 6-phosphate + H2O = N-acetyl-D-glucosamine 6-phosphate + (R)-lactate. It functions in the pathway amino-sugar metabolism; 1,6-anhydro-N-acetylmuramate degradation. Its pathway is amino-sugar metabolism; N-acetylmuramate degradation. The protein operates within cell wall biogenesis; peptidoglycan recycling. In terms of biological role, specifically catalyzes the cleavage of the D-lactyl ether substituent of MurNAc 6-phosphate, producing GlcNAc 6-phosphate and D-lactate. Together with AnmK, is also required for the utilization of anhydro-N-acetylmuramic acid (anhMurNAc) either imported from the medium or derived from its own cell wall murein, and thus plays a role in cell wall recycling. In Shigella boydii serotype 18 (strain CDC 3083-94 / BS512), this protein is N-acetylmuramic acid 6-phosphate etherase.